A 308-amino-acid polypeptide reads, in one-letter code: D-alanine--D-alanine ligase (308 aa).

Residues 103-302 (KTVMATAGVP…FDELVQWMVE (200 aa)) enclose the ATP-grasp domain. An ATP-binding site is contributed by 130 to 184 (MAPPYVIKPVADGSSVGVFMVTEAHEHPPQELFRDDWPHGEQLLVEKYVAGKELT). The Mg(2+) site is built by aspartate 252, glutamate 269, and asparagine 271.

This sequence belongs to the D-alanine--D-alanine ligase family. Mg(2+) is required as a cofactor. The cofactor is Mn(2+).

It localises to the cytoplasm. It carries out the reaction 2 D-alanine + ATP = D-alanyl-D-alanine + ADP + phosphate + H(+). The protein operates within cell wall biogenesis; peptidoglycan biosynthesis. Functionally, cell wall formation. The sequence is that of D-alanine--D-alanine ligase from Rhodopseudomonas palustris (strain BisB18).